The following is a 244-amino-acid chain: NVRFDLSSATSSSYKTFIKNLREALPKDGKVYDIPVLLSTVMDSRRFILIDLVNYDGQSITAAIDVLNVYIVAYSTGTVSYFFQQVPAQAPKLLFKGTQQRTLPYTGNYENLQTAAKKLRENIELGLPALDSAITTLFHYNAEAAASALLVLIQTTSEAARFRYIELQIANNVGTKFKPSQTIISLENNWSALSKQIQIAKNKNGQFETPVILIDPQGNRVQITNVTSNVVTQNIQLLLNIGAT.

Residues Tyr-70, Tyr-109, Glu-158, and Arg-161 contribute to the active site. Asn-189 and Asn-225 each carry an N-linked (GlcNAc...) asparagine glycan.

This sequence belongs to the ribosome-inactivating protein family. Type 1 RIP subfamily. In terms of processing, the N-linked glycan consists of GlcNAc2Man3Xyl.

The catalysed reaction is Endohydrolysis of the N-glycosidic bond at one specific adenosine on the 28S rRNA.. Has cytotoxic activity towards cancer cells, but not normal cells. Inhibits the growth of the human leukemia cell line K562, the murine melanoma cell line B16 and the lung adenocarcinoma cell line A549 with IC(50) values of 88.1 nM, 63.4 nM and 359.3 nM respectively. The polypeptide is Ribosome-inactivating protein cucurmosin (Cucurbita moschata (Winter crookneck squash)).